We begin with the raw amino-acid sequence, 436 residues long: Gamma-glutamyl phosphate reductase (436 aa).

It belongs to the gamma-glutamyl phosphate reductase family.

It localises to the cytoplasm. The catalysed reaction is L-glutamate 5-semialdehyde + phosphate + NADP(+) = L-glutamyl 5-phosphate + NADPH + H(+). It functions in the pathway amino-acid biosynthesis; L-proline biosynthesis; L-glutamate 5-semialdehyde from L-glutamate: step 2/2. In terms of biological role, catalyzes the NADPH-dependent reduction of L-glutamate 5-phosphate into L-glutamate 5-semialdehyde and phosphate. The product spontaneously undergoes cyclization to form 1-pyrroline-5-carboxylate. The protein is Gamma-glutamyl phosphate reductase of Prochlorococcus marinus (strain MIT 9515).